Consider the following 640-residue polypeptide: Chaperone protein HtpG (640 aa).

The tract at residues 1-348 is a; substrate-binding; the sequence is MADVAHQETH…SNDLPLNVSR (348 aa). Residues 349-565 are b; sequence EILQDNKITQ…GTGMSTQMIK (217 aa). Residues 566–640 are c; sequence LMQAAGQPVP…LNTLLMNLAK (75 aa).

The protein belongs to the heat shock protein 90 family. As to quaternary structure, homodimer.

Its subcellular location is the cytoplasm. Its function is as follows. Molecular chaperone. Has ATPase activity. The protein is Chaperone protein HtpG of Pseudoalteromonas atlantica (strain T6c / ATCC BAA-1087).